Here is a 422-residue protein sequence, read N- to C-terminus: Testin (422 aa).

Residues methionine 92 to glutamate 199 form the PET domain. The segment at leucine 198–aspartate 224 is disordered. The segment covering lysine 205 to alanine 217 has biased composition (polar residues). LIM zinc-binding domains follow at residues tyrosine 234–glutamate 297, proline 299–alanine 359, and glutamine 362–serine 422.

The protein belongs to the prickle / espinas / testin family.

It localises to the cytoplasm. Its subcellular location is the cell junction. The protein resides in the focal adhesion. Scaffold protein that may play a role in cell adhesion, cell spreading and in the reorganization of the actin cytoskeleton. May play a role in the regulation of cell proliferation. May inhibit cell growth. This is Testin (TES) from Gallus gallus (Chicken).